Here is a 92-residue protein sequence, read N- to C-terminus: MSDHYHYPLDASWSTEEITSVLHFLNQVELAYEAKVRAEELLKSYAAYKEIVRSKSQEKQIDREFQQASGYSTYQAVKKAREIEKGFFSLGR.

The protein belongs to the UPF0223 family.

The chain is UPF0223 protein Sez_0908 from Streptococcus equi subsp. zooepidemicus (strain MGCS10565).